A 480-amino-acid polypeptide reads, in one-letter code: G-rich sequence factor 1 (480 aa).

The transit peptide at 1–117 directs the protein to the mitochondrion; it reads MAGTRWVLGA…AAAAVPTRSY (117 aa). 2 RRM domains span residues 122-246 and 250-326; these read KTTY…SSPV and GVVR…PSRR. Phosphoserine is present on S244. A Phosphoserine modification is found at S335. An RRM 3 domain is found at 401 to 480; that stretch reads HFVHMRGLPF…LFLNSCPKGK (80 aa).

In terms of assembly, monomer. Found in a complex with DDX28, DHX30, FASTKD2 and FASTKD5. Interacts with the mitochondrial RNase P complex subunit TRMT10C/MRPP1. Interacts with the 2 components of the mitochondrial degradosome complex, PNPT1 and SUPV3L1, in an RNA-dependent manner.

The protein localises to the mitochondrion matrix. It is found in the cytoplasm. Its function is as follows. Regulator of post-transcriptional mitochondrial gene expression, required for assembly of the mitochondrial ribosome and for recruitment of mRNA and lncRNA. Binds RNAs containing the 14 base G-rich element. Preferentially binds RNAs transcribed from three contiguous genes on the light strand of mtDNA, the ND6 mRNA, and the long non-coding RNAs for MT-CYB and MT-ND5, each of which contains multiple consensus binding sequences. Involved in the degradosome-mediated decay of non-coding mitochondrial transcripts (MT-ncRNA) and tRNA-like molecules. Acts by unwinding G-quadruplex RNA structures in MT-ncRNA, thus facilitating their degradation by the degradosome. G-quadruplexes (G4) are non-canonical 4 stranded structures formed by transcripts from the light strand of mtDNA. In Homo sapiens (Human), this protein is G-rich sequence factor 1 (GRSF1).